The following is a 388-amino-acid chain: Chorismate synthase (388 aa).

NADP(+) is bound by residues arginine 39 and arginine 45. Residues 132–134 (RSS), 251–252 (NA), glycine 296, 311–315 (KPIPT), and arginine 337 each bind FMN.

The protein belongs to the chorismate synthase family. As to quaternary structure, homotetramer. FMNH2 is required as a cofactor.

The catalysed reaction is 5-O-(1-carboxyvinyl)-3-phosphoshikimate = chorismate + phosphate. It participates in metabolic intermediate biosynthesis; chorismate biosynthesis; chorismate from D-erythrose 4-phosphate and phosphoenolpyruvate: step 7/7. Functionally, catalyzes the anti-1,4-elimination of the C-3 phosphate and the C-6 proR hydrogen from 5-enolpyruvylshikimate-3-phosphate (EPSP) to yield chorismate, which is the branch point compound that serves as the starting substrate for the three terminal pathways of aromatic amino acid biosynthesis. This reaction introduces a second double bond into the aromatic ring system. The polypeptide is Chorismate synthase (Staphylococcus aureus (strain bovine RF122 / ET3-1)).